Reading from the N-terminus, the 114-residue chain is uncharacterized protein (114 aa).

The HIT domain maps to 6 to 114 (IFGKIIRREI…GGRSLAWPPG (109 aa)). A Histidine triad motif motif is present at residues 98–102 (HLHIH).

This is an uncharacterized protein from Synechococcus elongatus (strain ATCC 33912 / PCC 7942 / FACHB-805) (Anacystis nidulans R2).